Reading from the N-terminus, the 281-residue chain is Protein DOG1-like 1 (281 aa).

A DOG1 domain is found at 9 to 265 (EKLQQDCYNE…HEWGKSREHR (257 aa)). The tract at residues 262-281 (REHRRLEASGGDSGGNVTRE) is disordered.

In Arabidopsis thaliana (Mouse-ear cress), this protein is Protein DOG1-like 1.